The chain runs to 355 residues: Olfactory receptor 1I1 (355 aa).

Over 1-25 the chain is Extracellular; sequence MEPEKQTEISEFFLQGLSEKPEHQT. A helical transmembrane segment spans residues 26-49; the sequence is LLFTMFLSTYLVTIIGNALIILAI. Topologically, residues 50-57 are cytoplasmic; sequence ITDSHLHT. Residues 58 to 79 form a helical membrane-spanning segment; sequence PMYFFLFNLSLVDTLLSSTTVP. The Extracellular segment spans residues 80–100; it reads KMLANIQAQSRAIPFVGCLTQ. Residues 101 to 120 form a helical membrane-spanning segment; the sequence is MYAFHLFGTMDSFLLAVMAI. Residues 121–139 lie on the Cytoplasmic side of the membrane; that stretch reads DRFVAIVHPQRYLVLMCSP. The chain crosses the membrane as a helical span at residues 140–158; that stretch reads VCGLLLGASWMITNLQSLI. At 159-195 the chain is on the extracellular side; it reads HTCLMAQLTFCAGSEISHFFCDLMPLLKLSGSDTHTN. Residues 196-219 traverse the membrane as a helical segment; it reads ELVIFAFGIVVGTSPFSCILLSYI. The Cytoplasmic segment spans residues 220–236; that stretch reads RIFWTVFKIPSTRGKWK. A helical transmembrane segment spans residues 237 to 259; the sequence is AFSTCGLHLTVVSLSYGTIFAVY. Residues 260-272 are Extracellular-facing; it reads LQPTSPSSSQKDK. Residues 273-292 traverse the membrane as a helical segment; it reads AAALMCGVFIPMLNPFIYSI. Residues 293–355 are Cytoplasmic-facing; the sequence is RNKDMKAALG…QSLAGNRDME (63 aa).

This sequence belongs to the G-protein coupled receptor 1 family.

It is found in the cell membrane. Functionally, odorant receptor. This is Olfactory receptor 1I1 (OR1I1) from Homo sapiens (Human).